Here is a 218-residue protein sequence, read N- to C-terminus: Large ribosomal subunit protein uL4 (218 aa).

Residues 54-106 are disordered; it reads GTHAVKNRGAVSGGGRKPWKQKGTGRARQGSIRAPQWYHGGVAHGPVPRDYSQ.

The protein belongs to the universal ribosomal protein uL4 family. In terms of assembly, part of the 50S ribosomal subunit.

In terms of biological role, one of the primary rRNA binding proteins, this protein initially binds near the 5'-end of the 23S rRNA. It is important during the early stages of 50S assembly. It makes multiple contacts with different domains of the 23S rRNA in the assembled 50S subunit and ribosome. Its function is as follows. Forms part of the polypeptide exit tunnel. This Bifidobacterium animalis subsp. lactis (strain AD011) protein is Large ribosomal subunit protein uL4.